Here is a 701-residue protein sequence, read N- to C-terminus: Translation initiation factor IF-2 (701 aa).

A compositionally biased stretch (basic and acidic residues) spans 48–62; the sequence is KIYKPEKAEQSEKSQ. Residues 48–123 form a disordered region; the sequence is KIYKPEKAEQ…EPKEMPSKIT (76 aa). Low complexity-rich tracts occupy residues 63–89 and 97–109; these read QKNT…NNKP and NNKN…NNKQ. The span at 110-119 shows a compositional bias: basic and acidic residues; it reads PKQEEPKEMP. In terms of domain architecture, tr-type G spans 203–372; the sequence is ERPAVVTIMG…VLTSEVQELK (170 aa). Residues 212-219 form a G1 region; the sequence is GHVDHGKT. GTP is bound at residue 212–219; it reads GHVDHGKT. Positions 237–241 are G2; it reads GITQH. Positions 258-261 are G3; that stretch reads DTPG. GTP-binding positions include 258–262 and 312–315; these read DTPGH and NKID. The tract at residues 312–315 is G4; it reads NKID. Residues 348–350 form a G5 region; it reads SAL.

This sequence belongs to the TRAFAC class translation factor GTPase superfamily. Classic translation factor GTPase family. IF-2 subfamily.

The protein resides in the cytoplasm. One of the essential components for the initiation of protein synthesis. Protects formylmethionyl-tRNA from spontaneous hydrolysis and promotes its binding to the 30S ribosomal subunits. Also involved in the hydrolysis of GTP during the formation of the 70S ribosomal complex. The sequence is that of Translation initiation factor IF-2 from Staphylococcus saprophyticus subsp. saprophyticus (strain ATCC 15305 / DSM 20229 / NCIMB 8711 / NCTC 7292 / S-41).